A 638-amino-acid chain; its full sequence is ATP-dependent zinc metalloprotease FtsH (638 aa).

Topologically, residues 1–15 (MDNNHKGPNDPNSKK) are cytoplasmic. A helical membrane pass occupies residues 16–36 (PLLQNPLLLIAIFGIIIFVAM). The Periplasmic segment spans residues 37–122 (RVMNSDEGFG…INYSGFSESN (86 aa)). Residues 123–143 (FFADILGWLLPVLVILGLWMF) traverse the membrane as a helical segment. The Cytoplasmic portion of the chain corresponds to 144–638 (MASRMQKNMG…RLVPLEEHAS (495 aa)). Residue 216–223 (GPPGTGKT) participates in ATP binding. Histidine 440 lines the Zn(2+) pocket. Residue glutamate 441 is part of the active site. Residues histidine 444 and aspartate 517 each contribute to the Zn(2+) site.

This sequence in the central section; belongs to the AAA ATPase family. In the C-terminal section; belongs to the peptidase M41 family. Homohexamer. Zn(2+) is required as a cofactor.

The protein resides in the cell inner membrane. In terms of biological role, acts as a processive, ATP-dependent zinc metallopeptidase for both cytoplasmic and membrane proteins. Plays a role in the quality control of integral membrane proteins. In Helicobacter felis (strain ATCC 49179 / CCUG 28539 / NCTC 12436 / CS1), this protein is ATP-dependent zinc metalloprotease FtsH.